Consider the following 417-residue polypeptide: MESKNRAKLLVSVLAIVIAFAVFIKPLVSTVKQGLDLQGGTHVVLQAQETPESKVDDDAINRSIQIISRRVNELGLTEPVIQRQGKDKIIVELPGVKDPEQAIAMLGKTAMLEFKDMEGNTVLTGKDLKDSKASADQSGQPVVTLQFNEDGAKKFADLTARNVGRQIAILLDGKVLTAPRVSEPITGGNAQITGSKDAKEAEHLAILLRSGSLPVKLEVVENRTVGPTLGQDAKDASMKAFAIGLAGVFLFMLLYYRLSGLVADIVLLLYTLLLLAVMKGLNATLTLPGMAGIILSIGMAVDANVLIFERFKEEIANGKTLRAAVNSGFSRAFTTILDSNVTTLMAAAVLFYLGTGPIKGFAVTLALGVLISMFTAVTVTKFILGALIGSNFTKNPAWFGAKAFQPKAKDGKGEAAR.

6 helical membrane-spanning segments follow: residues 9 to 29 (LLVS…PLVS), 236 to 256 (ASMK…LLYY), 258 to 278 (LSGL…LAVM), 288 to 308 (PGMA…VLIF), 333 to 353 (FTTI…LFYL), and 360 to 380 (GFAV…VTVT).

Belongs to the SecD/SecF family. SecD subfamily. Forms a complex with SecF. Part of the essential Sec protein translocation apparatus which comprises SecA, SecYEG and auxiliary proteins SecDF. Other proteins may also be involved.

Its subcellular location is the cell membrane. Part of the Sec protein translocase complex. Interacts with the SecYEG preprotein conducting channel. SecDF uses the proton motive force (PMF) to complete protein translocation after the ATP-dependent function of SecA. The sequence is that of Protein translocase subunit SecD from Acidaminococcus fermentans (strain ATCC 25085 / DSM 20731 / CCUG 9996 / CIP 106432 / VR4).